The sequence spans 209 residues: Ribosomal RNA small subunit methyltransferase G (209 aa).

3 residues coordinate S-adenosyl-L-methionine: Gly74, Phe79, and Arg139.

This sequence belongs to the methyltransferase superfamily. RNA methyltransferase RsmG family.

The protein localises to the cytoplasm. It carries out the reaction guanosine(527) in 16S rRNA + S-adenosyl-L-methionine = N(7)-methylguanosine(527) in 16S rRNA + S-adenosyl-L-homocysteine. Specifically methylates the N7 position of guanine in position 527 of 16S rRNA. This Halorhodospira halophila (strain DSM 244 / SL1) (Ectothiorhodospira halophila (strain DSM 244 / SL1)) protein is Ribosomal RNA small subunit methyltransferase G.